The primary structure comprises 104 residues: Circadian clock oscillator protein KaiB (104 aa).

Belongs to the KaiB family. In terms of assembly, the KaiABC complex composition changes during the circadian cycle to control KaiC phosphorylation. Complexes KaiC(6), KaiA(2-4):KaiC(6), KaiB(6):KaiC(6) and KaiC(6):KaiB(6):KaiA(12) are among the most important forms, many form cooperatively. Undergoes a major conformational rearrangment; in the free state forms homotetramers as a dimer of dimers. When bound to the CI domain of KaiC switches to a monomeric thioredoxin-fold (KaiB(fs)). KaiB(fs) binds CikA, leading it to dephosphorylate phospho-RpaA.

Its function is as follows. Key component of the KaiABC oscillator complex, which constitutes the main circadian regulator in cyanobacteria. Complex composition changes during the circadian cycle to control KaiC phosphorylation. KaiA stimulates KaiC autophosphorylation, while KaiB sequesters KaiA, leading to KaiC autodephosphorylation. Phospho-Ser-431 KaiC accumulation triggers binding of KaiB to form the KaiB(6):KaiC(6) complex, leading to changes in output regulators CikA and SasA. KaiB switches to a thioredoxin-like fold (KaiB(fs)) when bound to KaiC. KaiB(6):KaiC(6) formation exposes a site for KaiA binding that sequesters KaiA from KaiC, making the KaiC(6):KaiB(6):KaiA(12) complex that results in KaiC autodephosphorylation. Functionally, a metamorphic protein which reversibly switches between an inactive tetrameric fold and a rare, thioredoxin-like monomeric fold (KaiB(fs)). KaiB(fs) binds phospho-KaiC, KaiA and CikA. KaiA and CikA compete for binding to KaiB(fs), and KaiB(fs) and SasA compete for binding to KaiC, thus the clock oscillator and output signal pathway are tightly coupled. This chain is Circadian clock oscillator protein KaiB, found in Acaryochloris marina (strain MBIC 11017).